We begin with the raw amino-acid sequence, 511 residues long: MALRAMRGIVNGAAPELPVPTGGPAVGAREQALAVSRNYLSQPRLTYKTVSGVNGPLVILDHVKFPRYAEIVHLTLPDGTKRSGQVLEVSGSKAVVQVFEGTSGIDAKKTSCEFTGDILRTPVSEDMLGRVFNGSGKPIDRGPVVLAEDFLDIMGQPINPQCRIYPEEMIQTGISAIDGMNSIARGQKIPIFSAAGLPHNEIAAQICRQAGLVKKSKDVVDYSEENFAIVFAAMGVNMETARFFKSDFEENGSMDNVCLFLNLANDPTIERIITPRLALTTAEFLAYQCEKHVLVILTDMSSYAEALREVSAAREEVPGRRGFPGYMYTDLATIYERAGRVEGRNGSITQIPILTMPNDDITHPIPDLTGYITEGQIYVDRQLHNRQIYPPINVLPSLSRLMKSAIGEGMTRKDHADVSNQLYACYAIGKDVQAMKAVVGEEALTSDDLLYLEFLQKFERNFIAQGPYENRTVFETLDIGWQLLRIFPKEMLKRIPQSTLSEFYPRDSAKH.

ATP is bound at residue arginine 400.

This sequence belongs to the ATPase alpha/beta chains family. V-ATPase is a heteromultimeric enzyme made up of two complexes: the ATP-hydrolytic V1 complex and the proton translocation V0 complex. The V1 complex consists of three catalytic AB heterodimers that form a heterohexamer, three peripheral stalks each consisting of EG heterodimers, one central rotor including subunits D and F, and the regulatory subunits C and H. The proton translocation complex V0 consists of the proton transport subunit a, a ring of proteolipid subunits c9c'', rotary subunit d, subunits e and f, and the accessory subunits ATP6AP1/Ac45 and ATP6AP2/PRR. Kidney; localizes to early distal nephron, encompassing thick ascending limbs and distal convoluted tubules (at protein level).

It localises to the apical cell membrane. Its subcellular location is the melanosome. The protein localises to the cytoplasm. The protein resides in the cytoplasmic vesicle. It is found in the secretory vesicle. It localises to the synaptic vesicle membrane. Its subcellular location is the clathrin-coated vesicle membrane. Non-catalytic subunit of the V1 complex of vacuolar(H+)-ATPase (V-ATPase), a multisubunit enzyme composed of a peripheral complex (V1) that hydrolyzes ATP and a membrane integral complex (V0) that translocates protons. V-ATPase is responsible for acidifying and maintaining the pH of intracellular compartments and in some cell types, is targeted to the plasma membrane, where it is responsible for acidifying the extracellular environment. In renal intercalated cells, can partially compensate the lack of ATP6V1B1 and mediate secretion of protons (H+) into the urine under base-line conditions but not in conditions of acid load. The chain is V-type proton ATPase subunit B, brain isoform (ATP6V1B2) from Homo sapiens (Human).